The chain runs to 451 residues: uncharacterized protein (451 aa).

Positions 29-204 (LERYPDIIVF…TSMTFKAVPI (176 aa)) constitute an FAD-binding PCMH-type domain. At His66 the chain carries Pros-8alpha-FAD histidine.

It belongs to the oxygen-dependent FAD-linked oxidoreductase family. FAD serves as cofactor.

This is an uncharacterized protein from Bacillus subtilis (strain 168).